A 125-amino-acid polypeptide reads, in one-letter code: Large ribosomal subunit protein bL12 (125 aa).

The protein belongs to the bacterial ribosomal protein bL12 family. In terms of assembly, homodimer. Part of the ribosomal stalk of the 50S ribosomal subunit. Forms a multimeric L10(L12)X complex, where L10 forms an elongated spine to which 2 to 4 L12 dimers bind in a sequential fashion. Binds GTP-bound translation factors.

In terms of biological role, forms part of the ribosomal stalk which helps the ribosome interact with GTP-bound translation factors. Is thus essential for accurate translation. The chain is Large ribosomal subunit protein bL12 from Alkalilimnicola ehrlichii (strain ATCC BAA-1101 / DSM 17681 / MLHE-1).